Here is a 117-residue protein sequence, read N- to C-terminus: Appetite-regulating hormone (117 aa).

Positions 1-23 (MPSPGTVCSLLLLGMLWLDLAMA) are cleaved as a signal peptide. Residue S26 is the site of O-decanoyl serine; alternate attachment. S26 is lipidated: O-hexanoyl serine; alternate. S26 carries O-octanoyl serine; alternate lipidation. The tract at residues 29 to 67 (SPEHQRAQQRKESKKPPAKLQPRALGGWLRPEDGDQAEG) is disordered. The span at 31–43 (EHQRAQQRKESKK) shows a compositional bias: basic and acidic residues. A propeptide spans 52-75 (ALGGWLRPEDGDQAEGAEDELEIQ) (removed in mature form). L98 bears the Leucine amide mark. A propeptide spans 99-117 (GKFLQDILWEEAKEAPADK) (removed in mature form).

The protein belongs to the motilin family. O-octanoylated by GOAT/MBOAT4. O-octanoylation is essential for ghrelin activity. In terms of processing, amidation of Leu-98 is essential for obestatin activity.

The protein localises to the secreted. Functionally, ghrelin is the ligand for growth hormone secretagogue receptor type 1 (GHSR). Induces the release of growth hormone from the pituitary. Has an appetite-stimulating effect, induces adiposity and stimulates gastric acid secretion. Involved in growth regulation. Obestatin may be the ligand for GPR39. May have an appetite-reducing effect resulting in decreased food intake. May reduce gastric emptying activity and jejunal motility. This is Appetite-regulating hormone (GHRL) from Papio hamadryas (Hamadryas baboon).